An 847-amino-acid polypeptide reads, in one-letter code: Leucine--tRNA ligase (847 aa).

The 'HIGH' region signature appears at 39-49; the sequence is PYPSGALHMGH. The 'KMSKS' region signature appears at 613–617; the sequence is KMSKS. Lysine 616 contributes to the ATP binding site.

It belongs to the class-I aminoacyl-tRNA synthetase family.

The protein resides in the cytoplasm. The catalysed reaction is tRNA(Leu) + L-leucine + ATP = L-leucyl-tRNA(Leu) + AMP + diphosphate. The sequence is that of Leucine--tRNA ligase from Gloeobacter violaceus (strain ATCC 29082 / PCC 7421).